Consider the following 670-residue polypeptide: Major fimbrium tip subunit FimD (670 aa).

The N-terminal stretch at 1-24 is a signal peptide; the sequence is MRTNRILNIICPPILFLLVGFLFG. The N-palmitoyl cysteine moiety is linked to residue cysteine 25. Residue cysteine 25 is the site of S-diacylglycerol cysteine attachment. A propeptide spanning residues 25–50 is cleaved from the precursor; that stretch reads CVREDIESDMNETSSLFLQVQPYNQR.

The protein belongs to the FimD family. Fimbriae are composed of a major, structural subunit and the minor components FimC, FimD and FimE. Identified in a complex composed of FimC, FimD and FimE (in vitro). The complex interacts with host extracellular matrix proteins, including fibronectin and type I collagen. Interacts with host CXCR4.

It localises to the fimbrium. Its subcellular location is the cell outer membrane. Its function is as follows. Probably a component of the fimbrium tip. These long, filamentous pili are attached to the cell surface; they mediate biofilm formation, adhesion onto host cells and onto other bacteria that are part of the oral microbiome. They play an important role in invasion of periodontal tissues and are major virulence factors. FimC, FimD and FimE contribute to interaction with host CXCR4 and thereby down-regulate the TLR2-mediated host immune response. The protein is Major fimbrium tip subunit FimD of Porphyromonas gingivalis (strain ATCC 33277 / DSM 20709 / CIP 103683 / JCM 12257 / NCTC 11834 / 2561).